The sequence spans 934 residues: Palmitoyltransferase ZDHHC8 (934 aa).

Residues 1-9 lie on the Cytoplasmic side of the membrane; the sequence is MPKCDVKTR. A helical transmembrane segment spans residues 10–30; sequence YIPATFAWIVLLLTTFLFFFY. Residues 31–47 are Extracellular-facing; that stretch reads PCQFYVKSHPWVLAYQG. Residues 48 to 68 form a helical membrane-spanning segment; it reads VITFFVLANFTLATFMDPGII. Topologically, residues 69–142 are cytoplasmic; it reads PKASPDEDCE…NNCIGRRNYR (74 aa). A DHHC domain is found at 99–149; it reads KWCVTCKFYRPPRCSHCSVCNHCIETFDHHCPWVNNCIGRRNYRFFFFFLV. Residue C129 is the S-palmitoyl cysteine intermediate of the active site. A helical membrane pass occupies residues 143–163; that stretch reads FFFFFLVSLSIHMLSIFSLCL. The Extracellular segment spans residues 164 to 177; it reads VYVLKIMPNIKDTA. A helical membrane pass occupies residues 178 to 198; that stretch reads PIVAIILMGLVTILAIPIFGL. The Cytoplasmic portion of the chain corresponds to 199–934; that stretch reads TGFHMVLVSR…IYDMNYEISV (736 aa). 6 disordered regions span residues 336–440, 506–525, 669–705, 751–780, 835–862, and 881–934; these read NGYN…GYTS, MASPVRRSNPGTPTQPRRPD, QRGVYMWKDTSPGFTNNAGQQQQQQQQAQQVVSSGIG, QQQQQQQQAAAAAAASYHRSNPTSPTTMPQ, PNPMGNQGGGNLQTQPSPQIKRKQTPTR, and LEQQ…EISV. 2 stretches are compositionally biased toward polar residues: residues 337-349 and 381-394; these read GYNQRSGSTTLYS and RHNSSSFYLPQVSD. The span at 397-411 shows a compositional bias: gly residues; the sequence is GLNGSVSTGGGGGGD. Over residues 415-429 the composition is skewed to basic residues; that stretch reads HMRLYHPRHSPHARP. Low complexity-rich tracts occupy residues 688 to 705 and 751 to 765; these read QQQQQQQQAQQVVSSGIG and QQQQQQQQAAAAAAA. A compositionally biased stretch (polar residues) spans 768–780; sequence HRSNPTSPTTMPQ. Over residues 910 to 919 the composition is skewed to polar residues; the sequence is MQSNASNSGT.

The protein belongs to the DHHC palmitoyltransferase family. ERF2/ZDHHC9 subfamily.

The protein localises to the golgi apparatus membrane. Its subcellular location is the cell membrane. It carries out the reaction L-cysteinyl-[protein] + hexadecanoyl-CoA = S-hexadecanoyl-L-cysteinyl-[protein] + CoA. Functionally, palmitoyltransferase that catalyzes the addition of palmitate onto various protein substrates and therefore functions in several unrelated biological processes. Regulates tissue growth possibly by regulating Ras64B protein stability. May regulate CG34450 mRNA levels. The sequence is that of Palmitoyltransferase ZDHHC8 from Drosophila melanogaster (Fruit fly).